Here is a 231-residue protein sequence, read N- to C-terminus: Cytochrome c oxidase subunit 2 (231 aa).

Residues 1–14 (MAHPVHVGLKEATS) are Mitochondrial intermembrane-facing. The helical transmembrane segment at 15 to 45 (PFMEELIAFHDHTLMIIFLISSLVLYIISMM) threads the bilayer. Over 46–59 (LTTKLTHTSTMNAQ) the chain is Mitochondrial matrix. Residues 60 to 87 (EIEIIWTILPAIILIMIALPSLRILYMT) traverse the membrane as a helical segment. Topologically, residues 88-231 (DEFNKPYLTL…WASYLYIVSL (144 aa)) are mitochondrial intermembrane. Cu cation is bound by residues His161, Cys196, Glu198, Cys200, His204, and Met207. A Mg(2+)-binding site is contributed by Glu198.

Belongs to the cytochrome c oxidase subunit 2 family. As to quaternary structure, component of the cytochrome c oxidase (complex IV, CIV), a multisubunit enzyme composed of 14 subunits. The complex is composed of a catalytic core of 3 subunits MT-CO1, MT-CO2 and MT-CO3, encoded in the mitochondrial DNA, and 11 supernumerary subunits COX4I, COX5A, COX5B, COX6A, COX6B, COX6C, COX7A, COX7B, COX7C, COX8 and NDUFA4, which are encoded in the nuclear genome. The complex exists as a monomer or a dimer and forms supercomplexes (SCs) in the inner mitochondrial membrane with NADH-ubiquinone oxidoreductase (complex I, CI) and ubiquinol-cytochrome c oxidoreductase (cytochrome b-c1 complex, complex III, CIII), resulting in different assemblies (supercomplex SCI(1)III(2)IV(1) and megacomplex MCI(2)III(2)IV(2)). Found in a complex with TMEM177, COA6, COX18, COX20, SCO1 and SCO2. Interacts with TMEM177 in a COX20-dependent manner. Interacts with COX20. Interacts with COX16. Requires Cu cation as cofactor.

It localises to the mitochondrion inner membrane. It carries out the reaction 4 Fe(II)-[cytochrome c] + O2 + 8 H(+)(in) = 4 Fe(III)-[cytochrome c] + 2 H2O + 4 H(+)(out). Functionally, component of the cytochrome c oxidase, the last enzyme in the mitochondrial electron transport chain which drives oxidative phosphorylation. The respiratory chain contains 3 multisubunit complexes succinate dehydrogenase (complex II, CII), ubiquinol-cytochrome c oxidoreductase (cytochrome b-c1 complex, complex III, CIII) and cytochrome c oxidase (complex IV, CIV), that cooperate to transfer electrons derived from NADH and succinate to molecular oxygen, creating an electrochemical gradient over the inner membrane that drives transmembrane transport and the ATP synthase. Cytochrome c oxidase is the component of the respiratory chain that catalyzes the reduction of oxygen to water. Electrons originating from reduced cytochrome c in the intermembrane space (IMS) are transferred via the dinuclear copper A center (CU(A)) of subunit 2 and heme A of subunit 1 to the active site in subunit 1, a binuclear center (BNC) formed by heme A3 and copper B (CU(B)). The BNC reduces molecular oxygen to 2 water molecules using 4 electrons from cytochrome c in the IMS and 4 protons from the mitochondrial matrix. The polypeptide is Cytochrome c oxidase subunit 2 (MT-CO2) (Brachyteles hypoxanthus (Northern muriqui)).